The chain runs to 56 residues: Large ribosomal subunit protein bL33 (56 aa).

This sequence belongs to the bacterial ribosomal protein bL33 family.

The sequence is that of Large ribosomal subunit protein bL33 from Anaplasma marginale (strain Florida).